Here is a 312-residue protein sequence, read N- to C-terminus: Olfactory receptor-like protein COR2 (312 aa).

The Extracellular portion of the chain corresponds to 1 to 26 (MASGNCTTPTTFILSGLTDNPRLQMP). Asn-5 carries an N-linked (GlcNAc...) asparagine glycan. Residues 27–49 (LFMVFLVIYTTTLLTNLGLIALI) form a helical membrane-spanning segment. Over 50–57 (GMDLHLQT) the chain is Cytoplasmic. The helical transmembrane segment at 58–79 (PMYIFLQNLSFTDAAYSTVITP) threads the bilayer. The Extracellular portion of the chain corresponds to 80 to 100 (KMLATFLEERRTISYVGCILQ). A disulfide bridge links Cys-97 with Cys-179. The helical transmembrane segment at 101–120 (YFSFVLLTTSEWLLLAVMAY) threads the bilayer. Topologically, residues 121–139 (DRYVAICKPLLYPSIMTKA) are cytoplasmic. A helical membrane pass occupies residues 140–164 (VCWRLVKGLYSLAFLNSLVHTSGLL). Residues 165–205 (KLSFCSSNVVNHFFCDNRPLFQISSSSTTLNELLVIISGSL) are Extracellular-facing. A helical membrane pass occupies residues 206-226 (FVMSSIITILISYVFIILTVV). Residues 227–239 (MIRSKDGKYKAFS) lie on the Cytoplasmic side of the membrane. Residues 240-260 (TCTSHLMAVSLFHGTVIFMYL) traverse the membrane as a helical segment. At 261-271 (RSVKLFSLDTD) the chain is on the extracellular side. The helical transmembrane segment at 272-292 (KIASLFYTVVIPMLNPLIYSW) threads the bilayer. At 293–312 (RNKEVKDALRRLTATSVWLH) the chain is on the cytoplasmic side.

Belongs to the G-protein coupled receptor 1 family.

It is found in the cell membrane. Functionally, odorant receptor. This is Olfactory receptor-like protein COR2 (COR2) from Gallus gallus (Chicken).